Here is a 475-residue protein sequence, read N- to C-terminus: Coronin-2B (475 aa).

5 WD repeats span residues 80 to 120, 130 to 172, 174 to 212, 215 to 258, and 260 to 303; these read GHQG…LKRN, GHSR…KMID, HTDV…VLQE, CKNH…MPVT, and EEID…PYLT. Positions 431–470 form a coiled coil; it reads NELLRMFFKQQEEIRRLKEQLSQRDLLVRQLELELKNLRN.

Belongs to the WD repeat coronin family.

The protein localises to the cytoplasm. It localises to the cytoskeleton. In terms of biological role, may play a role in the reorganization of neuronal actin structure. In Xenopus laevis (African clawed frog), this protein is Coronin-2B (coro2b).